The following is a 940-amino-acid chain: AP-2 complex subunit alpha (940 aa).

Phosphoserine occurs at positions 632 and 634. Over residues 651–662 the composition is skewed to polar residues; that stretch reads SHSKLNNSNANT. The segment at 651-679 is disordered; that stretch reads SHSKLNNSNANTDLLGLSTPPSNNIGSGS. The segment covering 668-679 has biased composition (low complexity); the sequence is STPPSNNIGSGS.

The protein belongs to the adaptor complexes large subunit family. In terms of assembly, adaptor protein complex 2 (AP-2) is a heterotetramer composed of two large adaptins (alpha-type and beta-type subunits), a medium adaptin (mu-type subunit AP50) and a small adaptin (sigma-type subunit AP17). In terms of tissue distribution, expressed in the Garland cells, imaginal disks, adult midgut precursors, the antenno-maxillary complex, the endoderm, the fat bodies, and the visceral mesoderm and cells of the CNS and PNS including neuroblasts, the presumptive stomatogastric nervous system, and the lateral chordotonal sense organs.

It is found in the cell membrane. It localises to the membrane. Its subcellular location is the coated pit. Its function is as follows. Adaptins are components of the adapter complexes which link clathrin to receptors in coated vesicles. Clathrin-associated protein complexes are believed to interact with the cytoplasmic tails of membrane proteins, leading to their selection and concentration. AP-2alpha is a subunit of the plasma membrane adapter. The chain is AP-2 complex subunit alpha (AP-2alpha) from Drosophila melanogaster (Fruit fly).